We begin with the raw amino-acid sequence, 383 residues long: WD repeat-containing protein 55 (383 aa).

A compositionally biased stretch (basic and acidic residues) spans Met-1–Glu-11. The tract at residues Met-1–Glu-33 is disordered. Over residues Asp-12–Ser-21 the composition is skewed to acidic residues. Ser-14 carries the phosphoserine modification. 7 WD repeats span residues Val-36–Lys-75, His-82–Arg-121, Ala-125–Asp-163, Gln-166–Leu-205, Pro-208–Asp-247, Ala-250–Ser-289, and His-293–Val-332. A Phosphoserine modification is found at Ser-354. The tract at residues Arg-363–Asp-383 is disordered. Over residues Glu-365–Asp-383 the composition is skewed to acidic residues. Phosphothreonine is present on Thr-378. Ser-382 is modified (phosphoserine).

Belongs to the WD repeat WDR55 family.

The protein localises to the nucleus. Its subcellular location is the nucleolus. The protein resides in the cytoplasm. In terms of biological role, nucleolar protein that acts as a modulator of rRNA synthesis. Plays a central role during organogenesis. This Homo sapiens (Human) protein is WD repeat-containing protein 55 (WDR55).